Consider the following 1461-residue polypeptide: Calmodulin-regulated spectrin-associated protein 2 (1461 aa).

A Calponin-homology (CH) domain is found at 211–324; that stretch reads PGGQKARYRK…FMAELFWWFE (114 aa). Positions 361 to 389 are disordered; the sequence is RDSSSSSDFSSRYTRPQTHSSASGGIRRS. 2 stretches are compositionally biased toward low complexity: residues 362–371 and 380–389; these read DSSSSSDFSS and SSASGGIRRS. A phosphoserine mark is found at Ser-391 and Ser-393. Position 401 is a phosphothreonine (Thr-401). Ser-439, Ser-572, Ser-573, Ser-585, and Ser-647 each carry phosphoserine. 2 disordered regions span residues 573-613 and 639-704; these read SPDN…EDSS and ASNP…GSEL. Thr-652 carries the phosphothreonine modification. A Phosphoserine modification is found at Ser-654. A compositionally biased stretch (low complexity) spans 654-673; sequence STKSQPGSSASSSSGVKMTS. Basic and acidic residues predominate over residues 677 to 687; it reads QKFRKLNHTDG. Residues 730-767 are a coiled coil; the sequence is LLASEMVHLRMRLEEKRRAIEAQKKKMEAAFTKQRQKM. Positions 787–826 are enriched in basic and acidic residues; the sequence is REEAAGAEDEKVYTDRAKERESQKMDGQRSKSLADIKESM. Residues 787 to 855 are disordered; it reads REEAAGAEDE…QWNLTSPSEE (69 aa). Ser-836 is modified (phosphoserine). The stretch at 861–900 forms a coiled coil; that stretch reads EILEYTKSIEKLNSSLHFLQQEMQRLSLQQEMLMQMREQQ. The MBD region stretch occupies residues 896–1007; that stretch reads MREQQAWVIS…IQTRSFVCFG (112 aa). Ser-905 and Ser-910 each carry phosphoserine. Disordered stretches follow at residues 921-992, 1004-1044, 1069-1090, 1102-1124, and 1163-1321; these read RQAG…RRFS, VCFG…GEKE, NEDQ…PTAP, DLKP…DKEQ, and KETQ…EYTG. A compositionally biased stretch (low complexity) spans 926 to 937; sequence SSAAAPFSSDSP. Residues 943-962 are compositionally biased toward polar residues; sequence SPQSSTRKSASFSVKNQRTP. Residues Thr-970, Thr-975, and Thr-977 each carry the phosphothreonine modification. A phosphoserine mark is found at Ser-981 and Ser-992. The span at 1011–1028 shows a compositional bias: basic and acidic residues; the sequence is EPQKEPKQKEEIKKEPSE. A compositionally biased stretch (pro residues) spans 1077 to 1089; that stretch reads TEPPPKPVFPPTA. Composition is skewed to basic and acidic residues over residues 1104–1124 and 1163–1224; these read KPPE…DKEQ and KETQ…DTVI. At Ser-1120 the chain carries Phosphoserine. Positions 1138-1210 form a coiled coil; it reads KDDQKAENDM…REFIRQEYMR (73 aa). Polar residues predominate over residues 1259-1271; the sequence is SSLSLASLNTGDS. Phosphoserine occurs at positions 1285, 1291, and 1293. Residues 1306 to 1318 show a composition bias toward polar residues; it reads NASTTSSVASGTE. In terms of domain architecture, CKK spans 1321-1455; it reads GPKLYKEPSA…QTKRPVTPKK (135 aa).

It belongs to the CAMSAP1 family. As to quaternary structure, interacts with CAMSAP3. Interacts with KATNA1 and KATNB1; leading to regulate the length of CAMSAP2-decorated microtubule stretches. Interacts with a complex formed by AKAP9 and PDE4DIP isoform 2/MMG8/SMYLE, which recruits CAMSAP2 to the Golgi. Interacts with MAPRE1/EB1.

It is found in the cytoplasm. It localises to the cytoskeleton. The protein resides in the golgi apparatus. Its subcellular location is the cilium basal body. Key microtubule-organizing protein that specifically binds the minus-end of non-centrosomal microtubules and regulates their dynamics and organization. Specifically recognizes growing microtubule minus-ends and autonomously decorates and stabilizes microtubule lattice formed by microtubule minus-end polymerization. Acts on free microtubule minus-ends that are not capped by microtubule-nucleating proteins or other factors and protects microtubule minus-ends from depolymerization. In addition, it also reduces the velocity of microtubule polymerization. Through the microtubule cytoskeleton, also regulates the organization of cellular organelles including the Golgi and the early endosomes. Essential for the tethering, but not for nucleation of non-centrosomal microtubules at the Golgi: together with Golgi-associated proteins AKAP9 and PDE4DIP, required to tether non-centrosomal minus-end microtubules to the Golgi, an important step for polarized cell movement. Also acts as a regulator of neuronal polarity and development: localizes to non-centrosomal microtubule minus-ends in neurons and stabilizes non-centrosomal microtubules, which is required for neuronal polarity, axon specification and dendritic branch formation. Through the microtubule cytoskeleton, regulates the autophagosome transport. In Mus musculus (Mouse), this protein is Calmodulin-regulated spectrin-associated protein 2.